Consider the following 328-residue polypeptide: uncharacterized protein (328 aa).

The G-patch domain maps to 10–55 (KMGFGHAMLLKMGWKGKGLGVEEDGRTEIIVNKKKQDKVGVGASIS). Residues 97–291 (EKITFKRTIK…KKSFSVSKTR (195 aa)) form a disordered region. Over residues 101–110 (FKRTIKKNSK) the composition is skewed to basic residues. The span at 116 to 126 (SDSDSDSDSES) shows a compositional bias: acidic residues. Low complexity-rich tracts occupy residues 141–158 (DSDS…SSSS) and 210–240 (SSSS…SSSE). The segment covering 248–257 (KNKNKNKNKK) has biased composition (basic residues).

This is an uncharacterized protein from Dictyostelium discoideum (Social amoeba).